The primary structure comprises 189 residues: Putative OVARIAN TUMOR DOMAIN-containing deubiquitinating enzyme 8 (189 aa).

The OTU domain occupies 1–103; sequence MMKSDGNCQF…GIHFNSIYKK (103 aa). Aspartate 5 is a catalytic residue. The Nucleophile role is filled by cysteine 8. Histidine 96 is an active-site residue. A disordered region spans residues 105-189; that stretch reads KEKGSRSSSS…NRNHHFHYSE (85 aa). Positions 120–181 form a coiled coil; it reads WMKLQRKKEN…KKEKKEKKNR (62 aa). 2 consecutive short sequence motifs (nuclear localization signal) follow at residues 125-132 and 163-170; these read RKKENEAK and KKKAKVQK. The span at 126–174 shows a compositional bias: basic and acidic residues; that stretch reads KKENEAKKKEEEEKERKDMEKEEKKKDKEDKKKDKEDKKKAKVQKEKKE. Positions 175–189 are enriched in basic residues; the sequence is KKEKKNRNHHFHYSE.

It belongs to the peptidase C85 family.

It is found in the nucleus. The enzyme catalyses Thiol-dependent hydrolysis of ester, thioester, amide, peptide and isopeptide bonds formed by the C-terminal Gly of ubiquitin (a 76-residue protein attached to proteins as an intracellular targeting signal).. In terms of biological role, hydrolase that can remove conjugated ubiquitin from proteins in vitro and may therefore play an important regulatory role at the level of protein turnover by preventing degradation. The chain is Putative OVARIAN TUMOR DOMAIN-containing deubiquitinating enzyme 8 from Arabidopsis thaliana (Mouse-ear cress).